The primary structure comprises 132 residues: Small ribosomal subunit protein uS11 (132 aa).

The protein belongs to the universal ribosomal protein uS11 family. As to quaternary structure, part of the 30S ribosomal subunit. Interacts with proteins S7 and S18. Binds to IF-3.

Located on the platform of the 30S subunit, it bridges several disparate RNA helices of the 16S rRNA. Forms part of the Shine-Dalgarno cleft in the 70S ribosome. The sequence is that of Small ribosomal subunit protein uS11 from Chlamydia caviae (strain ATCC VR-813 / DSM 19441 / 03DC25 / GPIC) (Chlamydophila caviae).